Here is a 469-residue protein sequence, read N- to C-terminus: MADPTSKDDHDGEGGRDKSSTFVQKLIDVEEAKTQIIYSLPMIFTNLFYYCIPLTSVMFASQLGQLELAGATLANSWATVTGFAFMTGLSGALETLCGQGFGAKSYRMLGIHLQSSCIVSLVFTILITILWFFTESVFLLLRQDPSISKQAALYMKYLAPGLLAYGFLQNILRFCQTQCIVTPLVLFSFLPLVINIGTTYALVHLAGLGFIGAPIATSISLWIAFVSLGFYVICSDKFKETWTGFSMESFHHVVLNLTLSIPSAAMVCLEYWAFEILVFLAGLMRNPEITTSLVAICVNTESISYMLTCGLSAATSTRVSNELGAGNVKGAKKATSVSVKLSLVLALGVVIAILVGHDAWVGLFSNSHVIKEGFASLRFFLAASITLDSIQGVLSGVARGCGWQRLATVINLGTFYLIGMPISVLCGFKLKLHAKGLWIGLICGMFCQSASLLLMTIFRKWTKLTAATV.

12 helical membrane-spanning segments follow: residues 40–60, 73–93, 121–141, 152–172, 183–203, 206–226, 252–274, 293–313, 344–364, 374–394, 406–426, and 438–458; these read LPMI…VMFA, LANS…SGAL, LVFT…FLLL, ALYM…QNIL, PLVL…YALV, AGLG…IAFV, HVVL…YWAF, LVAI…GLSA, VLAL…VGLF, FASL…QGVL, LATV…SVLC, and WIGL…MTIF.

Belongs to the multi antimicrobial extrusion (MATE) (TC 2.A.66.1) family.

The protein resides in the membrane. The protein is Protein DETOXIFICATION 18 of Arabidopsis thaliana (Mouse-ear cress).